The chain runs to 316 residues: D-alanine--D-alanine ligase (316 aa).

Residues 104–303 enclose the ATP-grasp domain; the sequence is KRVWLQHGLP…YADLCVAILA (200 aa). Residue 130–185 participates in ATP binding; that stretch reads PDRLGLPLILKPPHEGSTVGITKVAGYSDMKAAYELAARFDAEVLAEQFITGRELT. Mg(2+)-binding residues include Asp257, Glu270, and Asn272.

This sequence belongs to the D-alanine--D-alanine ligase family. Mg(2+) serves as cofactor. It depends on Mn(2+) as a cofactor.

The protein localises to the cytoplasm. It carries out the reaction 2 D-alanine + ATP = D-alanyl-D-alanine + ADP + phosphate + H(+). It participates in cell wall biogenesis; peptidoglycan biosynthesis. Functionally, cell wall formation. The polypeptide is D-alanine--D-alanine ligase (Bordetella parapertussis (strain 12822 / ATCC BAA-587 / NCTC 13253)).